The chain runs to 98 residues: Keratin-associated protein 3-3 (98 aa).

Repeat copies occupy residues cysteine 3 to arginine 7, cysteine 47 to cysteine 51, and cysteine 89 to cysteine 93. The segment at cysteine 3–glutamine 59 is 3 X 5 AA repeats of C-C-X(3).

It belongs to the KRTAP type 3 family. As to quaternary structure, interacts with hair keratins. Localized to the upper cortex of the hair shaft.

Functionally, in the hair cortex, hair keratin intermediate filaments are embedded in an interfilamentous matrix, consisting of hair keratin-associated proteins (KRTAP), which are essential for the formation of a rigid and resistant hair shaft through their extensive disulfide bond cross-linking with abundant cysteine residues of hair keratins. The matrix proteins include the high-sulfur and high-glycine-tyrosine keratins. The sequence is that of Keratin-associated protein 3-3 (KRTAP3-3) from Homo sapiens (Human).